We begin with the raw amino-acid sequence, 158 residues long: MYQIMRKQIEIFTDGSCLGNPGAGGIGVVLRYKQHEKTLSQGYFKTTNNRMELRAVIEALNLLKEPCAVTLHSDSQYMKNGITQWIFNWKKKNWKASNGKPVKNQDLWMALDNAVQAHTIDWRWVKGHSGHRENELCDQLAKQGAENPTLEDIGYQPD.

Residues 5–146 (MRKQIEIFTD…CDQLAKQGAE (142 aa)) form the RNase H type-1 domain. Positions 14, 52, 74, and 138 each coordinate Mg(2+).

Belongs to the RNase H family. In terms of assembly, monomer. Requires Mg(2+) as cofactor.

The protein localises to the cytoplasm. It catalyses the reaction Endonucleolytic cleavage to 5'-phosphomonoester.. Endonuclease that specifically degrades the RNA of RNA-DNA hybrids. This chain is Ribonuclease H, found in Mannheimia succiniciproducens (strain KCTC 0769BP / MBEL55E).